The chain runs to 234 residues: Phosphoribosylaminoimidazole-succinocarboxamide synthase (234 aa).

Belongs to the SAICAR synthetase family.

The enzyme catalyses 5-amino-1-(5-phospho-D-ribosyl)imidazole-4-carboxylate + L-aspartate + ATP = (2S)-2-[5-amino-1-(5-phospho-beta-D-ribosyl)imidazole-4-carboxamido]succinate + ADP + phosphate + 2 H(+). It functions in the pathway purine metabolism; IMP biosynthesis via de novo pathway; 5-amino-1-(5-phospho-D-ribosyl)imidazole-4-carboxamide from 5-amino-1-(5-phospho-D-ribosyl)imidazole-4-carboxylate: step 1/2. In Pyrobaculum aerophilum (strain ATCC 51768 / DSM 7523 / JCM 9630 / CIP 104966 / NBRC 100827 / IM2), this protein is Phosphoribosylaminoimidazole-succinocarboxamide synthase.